The primary structure comprises 432 residues: UPF0761 membrane protein Cag_0935 (432 aa).

The next 6 membrane-spanning stretches (helical) occupy residues 52–72, 108–128, 148–168, 190–210, 220–240, and 254–274; these read LLSIVPVLAVVLSVLNLFEVF, NIPLLGSLLLFVIALSLLSTV, FTLYWTVLTLGPLLIVSSLAA, LLALFPFINSIVAFFLLYMLV, AFAGALVASLLLELSKRWFLF, and ALSVVPMLFFWVYLAWVVVLV.

Belongs to the UPF0761 family.

Its subcellular location is the cell inner membrane. The protein is UPF0761 membrane protein Cag_0935 of Chlorobium chlorochromatii (strain CaD3).